Here is a 95-residue protein sequence, read N- to C-terminus: Class I hydrophobin 13 (95 aa).

4 cysteine pairs are disulfide-bonded: Cys14/Cys74, Cys21/Cys68, Cys22/Cys55, and Cys75/Cys88. Residues Asn23 and Asn77 are each glycosylated (N-linked (GlcNAc...) asparagine).

This sequence belongs to the fungal hydrophobin family. Self-assembles to form functional amyloid fibrils called rodlets. Self-assembly into fibrillar rodlets occurs spontaneously at hydrophobic:hydrophilic interfaces and the rodlets further associate laterally to form amphipathic monolayers.

It localises to the secreted. It is found in the cell wall. In terms of biological role, aerial growth, conidiation, and dispersal of filamentous fungi in the environment rely upon a capability of their secreting small amphipathic proteins called hydrophobins (HPBs) with low sequence identity. Class I can self-assemble into an outermost layer of rodlet bundles on aerial cell surfaces, conferring cellular hydrophobicity that supports fungal growth, development and dispersal; whereas Class II form highly ordered films at water-air interfaces through intermolecular interactions but contribute nothing to the rodlet structure. In Pleurotus ostreatus (strain PC15) (Oyster mushroom), this protein is Class I hydrophobin 13.